We begin with the raw amino-acid sequence, 129 residues long: Cocaine- and amphetamine-regulated transcript protein (129 aa).

A signal peptide spans 1–27; sequence MESSRLRLLPVLGAALLLLLPLLGAGA. Position 41 is a phosphotyrosine (Tyr-41). Ser-48 is modified (phosphoserine). 3 disulfides stabilise this stretch: Cys-95/Cys-113, Cys-101/Cys-121, and Cys-115/Cys-128.

It belongs to the CART family. Neuroendocrine tissues. Predominantly expressed in the hypothalamus, pituitary, and longitudinal muscle-myenteric plexus. Abundant expression is also seen in the midbrain/thalamus and eye. A lower level expression is seen in the other brain regions and adrenal.

Its subcellular location is the secreted. Satiety factor closely associated with the actions of leptin and neuropeptide y; this anorectic peptide inhibits both normal and starvation-induced feeding and completely blocks the feeding response induced by neuropeptide Y and regulated by leptin in the hypothalamus. The chain is Cocaine- and amphetamine-regulated transcript protein (Cartpt) from Rattus norvegicus (Rat).